The sequence spans 160 residues: Endoribonuclease YbeY (160 aa).

Zn(2+)-binding residues include His-125, His-129, and His-135.

This sequence belongs to the endoribonuclease YbeY family. Zn(2+) is required as a cofactor.

The protein resides in the cytoplasm. Its function is as follows. Single strand-specific metallo-endoribonuclease involved in late-stage 70S ribosome quality control and in maturation of the 3' terminus of the 16S rRNA. The sequence is that of Endoribonuclease YbeY from Leuconostoc citreum (strain KM20).